The chain runs to 106 residues: HIG1 domain family member 2A, mitochondrial (106 aa).

N-acetylalanine is present on Ala-2. Residues 20-106 enclose the HIG1 domain; sequence VIEGLSPTVY…LAVTAMKSRP (87 aa). 2 consecutive transmembrane segments (helical) span residues 47 to 67 and 83 to 103; these read PVVP…LYSF and IAAQ…TAMK. Over 104 to 106 the chain is Mitochondrial matrix; that stretch reads SRP.

As to quaternary structure, associates with cytochrome c oxidase (COX, complex IV); proposed complex component.

The protein localises to the mitochondrion membrane. It localises to the mitochondrion inner membrane. Functionally, proposed subunit of cytochrome c oxidase (COX, complex IV), which is the terminal component of the mitochondrial respiratory chain that catalyzes the reduction of oxygen to water. May be involved in cytochrome c oxidase activity. May play a role in the assembly of respiratory supercomplexes. The protein is HIG1 domain family member 2A, mitochondrial (HIGD2A) of Homo sapiens (Human).